The sequence spans 1583 residues: Dynamin-binding protein (1583 aa).

Methionine 1 carries the N-acetylmethionine modification. 4 consecutive SH3 domains span residues 2–61 (EAGS…IVTI), 66–126 (EGER…ELCL), 145–204 (YSMG…LLGP), and 243–302 (QPGT…LFSK). Disordered regions lie at residues 217-244 (HNDC…EEQP), 306-329 (EETM…DCRE), and 366-464 (ECEV…RGMY). Residues 224 to 243 (GEEETPTGEEERGPEEDEEQ) show a composition bias toward acidic residues. Positions 366–379 (ECEVHKSSHQDEGT) are enriched in basic and acidic residues. The span at 406-442 (ETINGVSSQSQVPFRPRWQQNQYYSTTGRGHLSTEQY) shows a compositional bias: polar residues. The residue at position 495 (serine 495) is a Phosphoserine. 2 disordered regions span residues 594 to 656 (RGSS…PSAQ) and 671 to 693 (LFTH…QTLD). A compositionally biased stretch (pro residues) spans 637–653 (PEPPLAMRPSRPAPLPP). Residues 675-685 (ESCESPEKEGP) show a composition bias toward basic and acidic residues. Residues 742 to 762 (LEFYESNIESLNMELQQLREM) adopt a coiled-coil conformation. The DH domain maps to 791–974 (KRAKVIEELL…KEINVNINEY (184 aa)). The 210-residue stretch at 1015-1224 (LKHLTGFAPQ…LKVAGREGNL (210 aa)) folds into the BAR domain. Positions 1292 to 1355 (PPEKLFQAER…YSSFLKPYNT (64 aa)) constitute an SH3 5 domain. Residues 1357 to 1496 (RSHSDVSVGS…GRNGQGKDLT (140 aa)) are disordered. Low complexity predominate over residues 1361–1387 (DVSVGSHSSTESEQSSSSPRFPRQNSS). A compositionally biased stretch (polar residues) spans 1388–1414 (GTLTFNPGSMAVSFTSGSCQKQPQDAT). Residues 1433–1456 (SESSPSRCPSDPDSSPQPRSWDSP) are compositionally biased toward low complexity. The SH3 6 domain occupies 1519–1582 (EGNQVYFAVY…PSNYIRKAEY (64 aa)).

Binds DNM1 via its N-terminal SH3 domains. The C-terminal SH3 domain binds a complex containing actin, tubulin, Hsp70 and actin-regulatory proteins, such as ENAH, EVL, WIRE, CR16, WAVE1 and NAP1L1. Interacts with FASLG. Interacts (via SH3 domain 6) with WASL. Interacts (via SH3 domain 6) interacts with ENAH. Interacts (via C-terminal domain) with TJP1; required for the apical cell-cell junction localization of DNMBP.

It localises to the cytoplasm. The protein localises to the golgi apparatus. It is found in the golgi stack. Its subcellular location is the cytoskeleton. The protein resides in the synapse. It localises to the cell junction. Its function is as follows. Plays a critical role as a guanine nucleotide exchange factor (GEF) for CDC42 in several intracellular processes associated with the actin and microtubule cytoskeleton. Regulates the structure of apical junctions in epithelial cells. Participates in the normal lumenogenesis of epithelial cell cysts by regulating spindle orientation. Plays a key role in ciliogenesis and cyst formation. May play a role in membrane trafficking between the cell surface and the Golgi. This Canis lupus familiaris (Dog) protein is Dynamin-binding protein.